Reading from the N-terminus, the 311-residue chain is tRNA-cytidine(32) 2-sulfurtransferase (311 aa).

Residues 58–63 (SGGKDS) carry the PP-loop motif motif. [4Fe-4S] cluster-binding residues include cysteine 133, cysteine 136, and cysteine 224.

Belongs to the TtcA family. As to quaternary structure, homodimer. Mg(2+) serves as cofactor. Requires [4Fe-4S] cluster as cofactor.

It is found in the cytoplasm. The enzyme catalyses cytidine(32) in tRNA + S-sulfanyl-L-cysteinyl-[cysteine desulfurase] + AH2 + ATP = 2-thiocytidine(32) in tRNA + L-cysteinyl-[cysteine desulfurase] + A + AMP + diphosphate + H(+). Its pathway is tRNA modification. Catalyzes the ATP-dependent 2-thiolation of cytidine in position 32 of tRNA, to form 2-thiocytidine (s(2)C32). The sulfur atoms are provided by the cysteine/cysteine desulfurase (IscS) system. This Polaromonas sp. (strain JS666 / ATCC BAA-500) protein is tRNA-cytidine(32) 2-sulfurtransferase.